The chain runs to 29 residues: Cytochrome b6-f complex subunit 8 (29 aa).

The helical transmembrane segment at 3–23 threads the bilayer; the sequence is MVSLAWAALMVVFTFSLSLVV.

The protein belongs to the PetN family. The 4 large subunits of the cytochrome b6-f complex are cytochrome b6, subunit IV (17 kDa polypeptide, PetD), cytochrome f and the Rieske protein, while the 4 small subunits are PetG, PetL, PetM and PetN. The complex functions as a dimer.

It localises to the plastid. The protein resides in the chloroplast thylakoid membrane. In terms of biological role, component of the cytochrome b6-f complex, which mediates electron transfer between photosystem II (PSII) and photosystem I (PSI), cyclic electron flow around PSI, and state transitions. This is Cytochrome b6-f complex subunit 8 from Cucumis sativus (Cucumber).